A 501-amino-acid polypeptide reads, in one-letter code: Glycerol kinase (501 aa).

T16 serves as a coordination point for ADP. T16, T17, and S18 together coordinate ATP. T16 is a sn-glycerol 3-phosphate binding site. R20 serves as a coordination point for ADP. Positions 84, 85, 135, and 242 each coordinate sn-glycerol 3-phosphate. Residues R84, E85, Y135, D242, and Q243 each coordinate glycerol. 2 residues coordinate ADP: T264 and G307. Residues T264, G307, Q311, and G408 each coordinate ATP. Residue G408 participates in ADP binding.

The protein belongs to the FGGY kinase family.

The enzyme catalyses glycerol + ATP = sn-glycerol 3-phosphate + ADP + H(+). It participates in polyol metabolism; glycerol degradation via glycerol kinase pathway; sn-glycerol 3-phosphate from glycerol: step 1/1. Its function is as follows. Key enzyme in the regulation of glycerol uptake and metabolism. Catalyzes the phosphorylation of glycerol to yield sn-glycerol 3-phosphate. The polypeptide is Glycerol kinase (Saccharolobus islandicus (strain M.16.27) (Sulfolobus islandicus)).